Reading from the N-terminus, the 764-residue chain is Nucleolar complex-associated protein 2 (764 aa).

The stretch at 3–69 (AKDDKKRVKK…EEELKRLQEK (67 aa)) forms a coiled coil. 4 disordered regions span residues 23–67 (ELNN…KRLQ), 89–113 (ATEIEDDADVEPDTDLEDTEKEGDD), 627–646 (AVFGKNAPSSDDEDDEDRME), and 651–726 (AFNS…EDDA). Basic and acidic residues predominate over residues 30–41 (IDAHDIVMEQKS). Residues 42-51 (DKKRGKKVKS) are compositionally biased toward basic residues. Residues 52–67 (KKAEAEEHEEELKRLQ) are compositionally biased toward basic and acidic residues. The span at 90–113 (TEIEDDADVEPDTDLEDTEKEGDD) shows a compositional bias: acidic residues. Basic and acidic residues predominate over residues 661-672 (DSKEKEPEEEKT). The short motif at 673–680 (KKKKRKRG) is the Nuclear localization signal 1 element. The span at 673–682 (KKKKRKRGGK) shows a compositional bias: basic residues. The segment covering 693–726 (GLGEDDVVEDFVLSSDEEEEDLFDIGGDKDEDDA) has biased composition (acidic residues). The Nuclear localization signal 2 signature appears at 738 to 745 (SKKTKGTY).

Belongs to the NOC2 family. As to quaternary structure, component of nucleolar complexes. Forms homodimers. Interacts with RBL and NOC3 in both the nucleolus and nucleoplasm. Binds to SWA2.

It is found in the nucleus. It localises to the nucleolus. Its subcellular location is the nucleoplasm. In terms of biological role, together with SWA2, probably involved in pre-ribosome export from the nucleus to the cytoplasm. This Arabidopsis thaliana (Mouse-ear cress) protein is Nucleolar complex-associated protein 2.